The following is a 334-amino-acid chain: Protein-methionine-sulfoxide reductase catalytic subunit MsrP (334 aa).

The tat-type signal signal peptide spans Met1–Ala44. Mo-molybdopterin is bound by residues Asn88, Tyr91–Glu92, Cys146, Thr181, Asn233, Arg238, and Gly249–Lys251.

This sequence belongs to the MsrP family. Heterodimer of a catalytic subunit (MsrP) and a heme-binding subunit (MsrQ). Mo-molybdopterin serves as cofactor. Post-translationally, predicted to be exported by the Tat system. The position of the signal peptide cleavage has not been experimentally proven.

The protein localises to the periplasm. The enzyme catalyses L-methionyl-[protein] + a quinone + H2O = L-methionyl-(S)-S-oxide-[protein] + a quinol. It carries out the reaction L-methionyl-[protein] + a quinone + H2O = L-methionyl-(R)-S-oxide-[protein] + a quinol. Functionally, part of the MsrPQ system that repairs oxidized periplasmic proteins containing methionine sulfoxide residues (Met-O), using respiratory chain electrons. Thus protects these proteins from oxidative-stress damage caused by reactive species of oxygen and chlorine generated by the host defense mechanisms. MsrPQ is essential for the maintenance of envelope integrity under bleach stress, rescuing a wide series of structurally unrelated periplasmic proteins from methionine oxidation, including the primary periplasmic chaperone SurA and the lipoprotein Pal. The catalytic subunit MsrP is non-stereospecific, being able to reduce both (R-) and (S-) diastereoisomers of methionine sulfoxide. The protein is Protein-methionine-sulfoxide reductase catalytic subunit MsrP of Escherichia coli O81 (strain ED1a).